The sequence spans 144 residues: Universal stress protein F (144 aa).

The protein belongs to the universal stress protein A family. Homodimer.

In Salmonella typhi, this protein is Universal stress protein F (uspF).